Reading from the N-terminus, the 338-residue chain is Ketol-acid reductoisomerase (NADP(+)) (338 aa).

The KARI N-terminal Rossmann domain maps to 1-181 (MQVYYDKDAD…GGGRAGVIET (181 aa)). Residues 24–27 (YGSQ), R47, S50, S52, and 82–85 (DEHQ) contribute to the NADP(+) site. H107 is an active-site residue. G133 contacts NADP(+). In terms of domain architecture, KARI C-terminal knotted spans 182–327 (SFKDETETDL…AKLRDMMPWI (146 aa)). The Mg(2+) site is built by D190, E194, E226, and E230. S251 lines the substrate pocket.

It belongs to the ketol-acid reductoisomerase family. Mg(2+) serves as cofactor.

The catalysed reaction is (2R)-2,3-dihydroxy-3-methylbutanoate + NADP(+) = (2S)-2-acetolactate + NADPH + H(+). It catalyses the reaction (2R,3R)-2,3-dihydroxy-3-methylpentanoate + NADP(+) = (S)-2-ethyl-2-hydroxy-3-oxobutanoate + NADPH + H(+). It functions in the pathway amino-acid biosynthesis; L-isoleucine biosynthesis; L-isoleucine from 2-oxobutanoate: step 2/4. The protein operates within amino-acid biosynthesis; L-valine biosynthesis; L-valine from pyruvate: step 2/4. Functionally, involved in the biosynthesis of branched-chain amino acids (BCAA). Catalyzes an alkyl-migration followed by a ketol-acid reduction of (S)-2-acetolactate (S2AL) to yield (R)-2,3-dihydroxy-isovalerate. In the isomerase reaction, S2AL is rearranged via a Mg-dependent methyl migration to produce 3-hydroxy-3-methyl-2-ketobutyrate (HMKB). In the reductase reaction, this 2-ketoacid undergoes a metal-dependent reduction by NADPH to yield (R)-2,3-dihydroxy-isovalerate. The sequence is that of Ketol-acid reductoisomerase (NADP(+)) from Thioalkalivibrio sulfidiphilus (strain HL-EbGR7).